The sequence spans 261 residues: U1 small nuclear ribonucleoprotein 70 kDa homolog (261 aa).

The RRM domain occupies 100 to 178; the sequence is KTMFLSRLSY…RRIVVDVERG (79 aa). The segment at 192–261 is disordered; it reads GLGGRHYTKE…DSSPKRRRYN (70 aa). Over residues 198 to 215 the composition is skewed to basic and acidic residues; it reads YTKERPRRERGSRFRGDS. Positions 216–235 are enriched in gly residues; the sequence is GFRGGYRGGFRKSSGGGSRF.

As to quaternary structure, component of the spliceosome, where it is associated with snRNP U1. Associates with U1 snRNA.

The protein resides in the nucleus. Functionally, involved in nuclear mRNA splicing. Essential for growth. This Schizosaccharomyces pombe (strain 972 / ATCC 24843) (Fission yeast) protein is U1 small nuclear ribonucleoprotein 70 kDa homolog.